The sequence spans 1062 residues: Zinc finger protein swm (1062 aa).

The 69-residue stretch at 7 to 75 (DKLKDWLSVV…ERLFDAIASE (69 aa)) folds into the PWI domain. Disordered regions lie at residues 119–145 (ADSPPPPPKDNVIKPDSNQVKLEQASQ) and 171–340 (KPAF…PDRV). The span at 134 to 145 (DSNQVKLEQASQ) shows a compositional bias: polar residues. Residues 172–182 (PAFDHKTKDSH) show a composition bias toward basic and acidic residues. Residues 197–207 (SASPPGRSSGV) show a composition bias toward low complexity. Over residues 208–220 (SGSGGGGPGGAGL) the composition is skewed to gly residues. Basic residues predominate over residues 234–249 (SRRRRASLRSRSRSRS). Composition is skewed to basic and acidic residues over residues 264–273 (RRVNEREKTQ) and 294–310 (RNFDRRRIGGNADDRPR). A compositionally biased stretch (polar residues) spans 322–340 (RSMSPERNARRNQNSPDRV). The C3H1-type zinc finger occupies 363–391 (SHPRQRCRDFDEKGYCVRGETCPWDHGVN). The segment at 416–463 (EIWARSGGPPPGAGQGPVPPPTQPGQTTINPFSGNVRPTTLMSGSGPS) is disordered. Over residues 423 to 438 (GPPPGAGQGPVPPPTQ) the composition is skewed to pro residues. Residues 444-461 (INPFSGNVRPTTLMSGSG) are compositionally biased toward polar residues. The region spanning 561–635 (SSLELRKVPR…RFIKVFWHND (75 aa)) is the RRM domain. 5 disordered regions span residues 666-704 (NVPAVPTPNADGAKISNANPLTEAGAGNIGTPATEQANT), 716-741 (TTTAGGSAGGAAGAGAPGSGRPLNPA), 822-847 (QDQLQAQMQQQQQQQQPPVKKTKEQQ), 886-920 (SAANNKSTHYAPASGAPGGGAGRKRPNLPEGPTRV), and 1004-1062 (APVE…SWRR). Residues 721-733 (GSAGGAAGAGAPG) show a composition bias toward gly residues. Over residues 823–840 (DQLQAQMQQQQQQQQPPV) the composition is skewed to low complexity. Positions 1018 to 1037 (SLENPKQLIQSVSESESLLG) are enriched in polar residues. Residues 1046–1056 (LEDEEEDEESE) are compositionally biased toward acidic residues.

It localises to the nucleus. Functionally, negatively regulates Hedgehog (hh) protein signal in wing development. Regulates neural-specific glycosylation by binding to FucTA mRNA and facilitating its nuclear export in neural cells. The protein is Zinc finger protein swm of Drosophila melanogaster (Fruit fly).